The primary structure comprises 155 residues: Protein FAM163B (155 aa).

The chain crosses the membrane as a helical span at residues 6 to 26; sequence VVITGGILATVILLCIIAVLC.

This sequence belongs to the FAM163 family.

It is found in the membrane. This Xenopus tropicalis (Western clawed frog) protein is Protein FAM163B (fam163b).